We begin with the raw amino-acid sequence, 461 residues long: Metacaspase-1 (461 aa).

Composition is skewed to gly residues over residues 1–21 (MSYPGQGGNTYGGGPPGGYGG), 45–66 (QYGGGYGGPGGGYGGSGGGYGP), 74–86 (QYGGSGGPGGYGP), and 105–119 (PGGQGGGGGGYGHPG). Residues 1–154 (MSYPGQGGNT…PQGNQAFGGT (154 aa)) form a disordered region. 2 stretches are compositionally biased toward low complexity: residues 121-131 (GNQAPPGQYGQ) and 138-148 (HGNHNMPPQGN). Active-site residues include H252 and C308.

This sequence belongs to the peptidase C14B family.

In terms of biological role, involved in cell death (apoptosis). The chain is Metacaspase-1 (MCA1) from Yarrowia lipolytica (strain CLIB 122 / E 150) (Yeast).